Consider the following 42-residue polypeptide: Cytochrome b6-f complex subunit 7 (42 aa).

The chain crosses the membrane as a helical span at residues 19-37 (AVTCIFMTLFGLSLGFALL).

It belongs to the PetM family. The 4 large subunits of the cytochrome b6-f complex are cytochrome b6, subunit IV (17 kDa polypeptide, PetD), cytochrome f and the Rieske protein, while the 4 small subunits are PetG, PetL, PetM and PetN. The complex functions as a dimer.

It is found in the plastid. The protein localises to the chloroplast thylakoid membrane. Component of the cytochrome b6-f complex, which mediates electron transfer between photosystem II (PSII) and photosystem I (PSI), cyclic electron flow around PSI, and state transitions. The polypeptide is Cytochrome b6-f complex subunit 7 (Thalassiosira pseudonana (Marine diatom)).